The primary structure comprises 401 residues: Insertion element ISM1 uncharacterized 48.3 kDa protein (401 aa).

This polypeptide is involved in transposition, and should therefore bind to nucleic acids. In Methanobrevibacter smithii, this protein is Insertion element ISM1 uncharacterized 48.3 kDa protein.